A 63-amino-acid chain; its full sequence is Arabinogalactan protein 22 (63 aa).

The signal sequence occupies residues 1–27 (MASLKFPLEILAVFVIISVILLPIAQS). A 4-hydroxyproline mark is found at proline 32, proline 34, and proline 36. O-linked (Ara...) hydroxyproline glycosylation is found at proline 32, proline 34, and proline 36. Residue serine 38 is the site of GPI-anchor amidated serine attachment. Residues 39-63 (DGTSIDQGIAYVLMMVALALTYFIH) constitute a propeptide, removed in mature form.

The protein belongs to the AG-peptide AGP family. In terms of processing, contains 4-hydroxyproline; hydroxylated on Pro-32, Pro-34 and Pro-36. O-glycosylated on hydroxyprolines; noncontiguous hydroxylproline residues are glycosylated with arabinogalactan.

It localises to the cell membrane. Functionally, proteoglycan that seems to be implicated in diverse developmental roles such as differentiation, cell-cell recognition, embryogenesis and programmed cell death. This Arabidopsis thaliana (Mouse-ear cress) protein is Arabinogalactan protein 22.